Consider the following 414-residue polypeptide: Multifunctional CCA protein (414 aa).

Glycine 8 and arginine 11 together coordinate ATP. Positions 8 and 11 each coordinate CTP. Mg(2+) is bound by residues glutamate 21 and aspartate 23. The ATP site is built by arginine 91, arginine 137, and arginine 140. Arginine 91, arginine 137, and arginine 140 together coordinate CTP. Positions 228–329 (TGIHTMMTVA…LKLFDAIDVW (102 aa)) constitute an HD domain.

The protein belongs to the tRNA nucleotidyltransferase/poly(A) polymerase family. Bacterial CCA-adding enzyme type 1 subfamily. Monomer. Can also form homodimers and oligomers. Mg(2+) serves as cofactor. Ni(2+) is required as a cofactor.

The enzyme catalyses a tRNA precursor + 2 CTP + ATP = a tRNA with a 3' CCA end + 3 diphosphate. It carries out the reaction a tRNA with a 3' CCA end + 2 CTP + ATP = a tRNA with a 3' CCACCA end + 3 diphosphate. In terms of biological role, catalyzes the addition and repair of the essential 3'-terminal CCA sequence in tRNAs without using a nucleic acid template. Adds these three nucleotides in the order of C, C, and A to the tRNA nucleotide-73, using CTP and ATP as substrates and producing inorganic pyrophosphate. tRNA 3'-terminal CCA addition is required both for tRNA processing and repair. Also involved in tRNA surveillance by mediating tandem CCA addition to generate a CCACCA at the 3' terminus of unstable tRNAs. While stable tRNAs receive only 3'-terminal CCA, unstable tRNAs are marked with CCACCA and rapidly degraded. The sequence is that of Multifunctional CCA protein from Pectobacterium atrosepticum (strain SCRI 1043 / ATCC BAA-672) (Erwinia carotovora subsp. atroseptica).